Reading from the N-terminus, the 31-residue chain is Cliotide T11 (31 aa).

The segment at residues 1–31 is a cross-link (cyclopeptide (Gly-Asn)); it reads GIPCGESCVFIPCTITALLGCSCKDKVCYKN. 3 disulfides stabilise this stretch: Cys-4/Cys-21, Cys-8/Cys-23, and Cys-13/Cys-28.

Post-translationally, contains 3 disulfide bonds. This is a cyclic peptide. As to expression, expressed in seed but not in root, nodule, flower, stem, shoot, leaf and pod (at protein level).

In terms of biological role, probably participates in a plant defense mechanism. The sequence is that of Cliotide T11 from Clitoria ternatea (Butterfly pea).